Here is a 758-residue protein sequence, read N- to C-terminus: 5-methyltetrahydropteroyltriglutamate--homocysteine methyltransferase (758 aa).

Residues 17–20 and Lys117 each bind 5-methyltetrahydropteroyltri-L-glutamate; that span reads RELK. L-homocysteine-binding positions include 434 to 436 and Glu487; that span reads IGS. L-methionine-binding positions include 434 to 436 and Glu487; that span reads IGS. Residues 518–519 and Trp564 each bind 5-methyltetrahydropteroyltri-L-glutamate; that span reads RC. Position 602 (Asp602) interacts with L-homocysteine. Asp602 contacts L-methionine. 5-methyltetrahydropteroyltri-L-glutamate is bound at residue Glu608. Zn(2+)-binding residues include His644, Cys646, and Glu668. The active-site Proton donor is the His697. Residue Cys729 participates in Zn(2+) binding.

The protein belongs to the vitamin-B12 independent methionine synthase family. Requires Zn(2+) as cofactor.

The catalysed reaction is 5-methyltetrahydropteroyltri-L-glutamate + L-homocysteine = tetrahydropteroyltri-L-glutamate + L-methionine. Its pathway is amino-acid biosynthesis; L-methionine biosynthesis via de novo pathway; L-methionine from L-homocysteine (MetE route): step 1/1. Catalyzes the transfer of a methyl group from 5-methyltetrahydrofolate to homocysteine resulting in methionine formation. The sequence is that of 5-methyltetrahydropteroyltriglutamate--homocysteine methyltransferase from Yersinia pseudotuberculosis serotype O:1b (strain IP 31758).